Consider the following 247-residue polypeptide: Carboxy-S-adenosyl-L-methionine synthase (247 aa).

S-adenosyl-L-methionine-binding positions include Tyr39, 64–66, 89–90, 117–118, Asn132, and Arg199; these read GCS, DN, and DI.

This sequence belongs to the class I-like SAM-binding methyltransferase superfamily. Cx-SAM synthase family. Homodimer.

It carries out the reaction prephenate + S-adenosyl-L-methionine = carboxy-S-adenosyl-L-methionine + 3-phenylpyruvate + H2O. In terms of biological role, catalyzes the conversion of S-adenosyl-L-methionine (SAM) to carboxy-S-adenosyl-L-methionine (Cx-SAM). In Salmonella enteritidis PT4 (strain P125109), this protein is Carboxy-S-adenosyl-L-methionine synthase.